The primary structure comprises 193 residues: MNTYKNSLNHFLNLVDCLEKIPNVGKKSAFKMAYHLGLENPYLALKITHALENALENLKRCASCNALSESEICEICSDESRQNSQLCMVLHPRDVFILEDLKDFLGRYYVLNSIEEVDFNALEKRLIEENIKEIIFAFPPTLANDSLMLYIEDKLQHFHLTFTKIAQGVPTGVNFENIDSVSLSRAFNSRIKA.

Residues 61 to 76 (CASCNALSESEICEIC) form a C4-type zinc finger. One can recognise a Toprim domain in the interval 84 to 170 (SQLCMVLHPR…TFTKIAQGVP (87 aa)).

It belongs to the RecR family.

Functionally, may play a role in DNA repair. It seems to be involved in an RecBC-independent recombinational process of DNA repair. It may act with RecF and RecO. This chain is Recombination protein RecR, found in Helicobacter pylori (strain Shi470).